A 482-amino-acid chain; its full sequence is Putative alpha-L-fucosidase (482 aa).

The first 16 residues, 1–16 (MIFLIFSILFLHLANC), serve as a signal peptide directing secretion. N-linked (GlcNAc...) asparagine glycans are attached at residues N182, N343, N359, and N419.

It belongs to the glycosyl hydrolase 29 family.

The enzyme catalyses an alpha-L-fucoside + H2O = L-fucose + an alcohol. Functionally, alpha-L-fucosidase is responsible for hydrolyzing the alpha-1,6-linked fucose joined to the reducing-end N-acetylglucosamine of the carbohydrate moieties of glycoproteins. The polypeptide is Putative alpha-L-fucosidase (Caenorhabditis elegans).